We begin with the raw amino-acid sequence, 208 residues long: Meiotically up-regulated gene 9 protein (208 aa).

The interval 77–114 (VPASNEKAARVSNLKTVPSLKRENKEVNANSKPPVKQQ) is disordered.

In terms of biological role, has a role in meiosis. The polypeptide is Meiotically up-regulated gene 9 protein (mug9) (Schizosaccharomyces pombe (strain 972 / ATCC 24843) (Fission yeast)).